Reading from the N-terminus, the 389-residue chain is Succinate--CoA ligase [ADP-forming] subunit beta (389 aa).

The ATP-grasp domain occupies 9–244 (KKLFADYGLP…LTQEDPREAE (236 aa)). Residues K46, 53–55 (GRG), E99, A102, and E107 contribute to the ATP site. N199 and D213 together coordinate Mg(2+). Substrate contacts are provided by residues N264 and 321–323 (GIV).

It belongs to the succinate/malate CoA ligase beta subunit family. In terms of assembly, heterotetramer of two alpha and two beta subunits. Mg(2+) serves as cofactor.

It catalyses the reaction succinate + ATP + CoA = succinyl-CoA + ADP + phosphate. It carries out the reaction GTP + succinate + CoA = succinyl-CoA + GDP + phosphate. It functions in the pathway carbohydrate metabolism; tricarboxylic acid cycle; succinate from succinyl-CoA (ligase route): step 1/1. Succinyl-CoA synthetase functions in the citric acid cycle (TCA), coupling the hydrolysis of succinyl-CoA to the synthesis of either ATP or GTP and thus represents the only step of substrate-level phosphorylation in the TCA. The beta subunit provides nucleotide specificity of the enzyme and binds the substrate succinate, while the binding sites for coenzyme A and phosphate are found in the alpha subunit. The sequence is that of Succinate--CoA ligase [ADP-forming] subunit beta from Histophilus somni (strain 2336) (Haemophilus somnus).